We begin with the raw amino-acid sequence, 323 residues long: Beta-ketoacyl-[acyl-carrier-protein] synthase III (323 aa).

Active-site residues include Cys-114 and His-250. The ACP-binding stretch occupies residues 251–255 (QANIR). The active site involves Asn-280.

This sequence belongs to the thiolase-like superfamily. FabH family. Homodimer.

The protein localises to the cytoplasm. The enzyme catalyses malonyl-[ACP] + acetyl-CoA + H(+) = 3-oxobutanoyl-[ACP] + CO2 + CoA. It functions in the pathway lipid metabolism; fatty acid biosynthesis. Functionally, catalyzes the condensation reaction of fatty acid synthesis by the addition to an acyl acceptor of two carbons from malonyl-ACP. Catalyzes the first condensation reaction which initiates fatty acid synthesis and may therefore play a role in governing the total rate of fatty acid production. Possesses both acetoacetyl-ACP synthase and acetyl transacylase activities. Its substrate specificity determines the biosynthesis of branched-chain and/or straight-chain of fatty acids. The protein is Beta-ketoacyl-[acyl-carrier-protein] synthase III of Roseobacter denitrificans (strain ATCC 33942 / OCh 114) (Erythrobacter sp. (strain OCh 114)).